A 454-amino-acid polypeptide reads, in one-letter code: MGLPTVPGLLLSLVLLALLMGIHPSGVTGLVPSLGDREKRDSLCPQGKYVHSKNNSICCTKCHKGTYLVSDCPSPGRDTVCRECEKGTFTASQNYLRQCLSCKTCRKEMSQVEISPCQADKDTVCGCKENQFQRYLSETHFQCVDCSPCFNGTVTIPCKETQNTVCNCHAGFFLRESECVPCSHCKKNEECMKLCLPPPLANVTNPQDSGTAVLLPLVILLGLCLLSFIFISLMCRYPRWRPEVYSIICRDPVPVKEEKAGKPLTPAPSPAFSPTSGFNPTLGFSTPGFSSPVSSTPISPIFGPSNWHFMPPVSEVVPTQGADPLLYESLCSVPAPTSVQKWEDSAHPQRPDNADLAILYAVVDGVPPARWKEFMRFMGLSEHEIERLEMQNGRCLREAQYSMLEAWRRRTPRHEDTLEVVGLVLSKMNLAGCLENILEALRNPAPSSTTRLPR.

The signal sequence occupies residues 1-29 (MGLPTVPGLLLSLVLLALLMGIHPSGVTG). Residues 30–212 (LVPSLGDREK…VTNPQDSGTA (183 aa)) lie on the Extracellular side of the membrane. TNFR-Cys repeat units follow at residues 43–82 (LCPQ…TVCR), 83–125 (ECEK…DTVC), 126–166 (GCKE…NTVC), and 167–196 (NCHA…KLCL). Intrachain disulfides connect C44-C58, C59-C72, C62-C81, C84-C99, C102-C117, C105-C125, C127-C143, C146-C158, C149-C166, C168-C179, C182-C195, and C185-C191. N54 is a glycosylation site (N-linked (GlcNAc...) asparagine). N-linked (GlcNAc...) asparagine glycosylation is present at N151. A glycan (N-linked (GlcNAc...) asparagine) is linked at N202. A helical membrane pass occupies residues 213 to 235 (VLLPLVILLGLCLLSFIFISLMC). Topologically, residues 236–454 (RYPRWRPEVY…APSSTTRLPR (219 aa)) are cytoplasmic. The N-SMase activation domain (NSD) stretch occupies residues 339-349 (VQKWEDSAHPQ). The 86-residue stretch at 356-441 (LAILYAVVDG…GCLENILEAL (86 aa)) folds into the Death domain. (Microbial infection) N-beta-linked (GlcNAc) arginine glycosylation occurs at R376.

As to quaternary structure, binding of TNF to the extracellular domain leads to homotrimerization. The aggregated death domains provide a novel molecular interface that interacts specifically with the death domain of TRADD. Various TRADD-interacting proteins such as TRAFS, RIPK1 and possibly FADD, are recruited to the complex by their association with TRADD. This complex activates at least two distinct signaling cascades, apoptosis and NF-kappa-B signaling. Interacts with BAG4, BABAM2, FEM1B, GRB2, SQSTM1 and TRPC4AP. Interacts with DAB2IP. Interacts directly with NOL3 (via CARD domain); inhibits TNF-signaling pathway. Interacts with SH3RF2, TRADD and RIPK1. SH3RF2 facilitates the recruitment of RIPK1 and TRADD to TNFRSF1A in a TNF-alpha-dependent process. Interacts with PGLYRP1; this interaction is important for cell death induction. Interacts (via death domain) with MADD (via death domain). Post-translationally, (Microbial infection) Glycosylated at Arg-376 by S.typhimurium protein Ssek3: arginine GlcNAcylation prevents homotypic/heterotypic death domain interactions.

The protein resides in the cell membrane. The protein localises to the golgi apparatus membrane. Receptor for TNFSF2/TNF-alpha and homotrimeric TNFSF1/lymphotoxin-alpha. The adapter molecule FADD recruits caspase-8 to the activated receptor. The resulting death-inducing signaling complex (DISC) performs caspase-8 proteolytic activation which initiates the subsequent cascade of caspases (aspartate-specific cysteine proteases) mediating apoptosis. This Mus musculus (Mouse) protein is Tumor necrosis factor receptor superfamily member 1A (Tnfrsf1a).